Here is a 314-residue protein sequence, read N- to C-terminus: MKPRKIILMGLRRSGKSSIQKVVFYKMPPNETLFLESTSKLTQDHISSFIDFSVWDFPGQVDVFDAAFDFESIFTQVGALIFVIDAQDDYLDALARLHVTVARVVTINPNICIEVFIHKVDGLSDEFKIDTQRDIQQRTQDELADIGLENVPISFHLTSIFDHSIFEAFSRVIQKLIPQLPTLENLLNIFCSNSLVEKAYLFDVLSKIYVATDSSPVDVQSYEICSDFIDVILDIGSIYGRSSQLKPGHSPEILDETSSVIRLSNDLVLFLREMNQYLALICIVRADNFEKSGLIEYNVQCLQTAIQSIFSPRT.

The GTP site is built by serine 17, serine 18, serine 37, histidine 118, and aspartate 121.

The protein belongs to the GTR/RAG GTP-binding protein family.

It localises to the vacuole membrane. The protein resides in the cytoplasm. It is found in the nucleus. The catalysed reaction is GTP + H2O = GDP + phosphate + H(+). Its function is as follows. GTPase involved in activation of the TORC1 signaling pathway, which promotes growth and represses autophagy in nutrient-rich conditions. Also required for TORC1 inactivation during nitrogen starvation. The polypeptide is GTP-binding protein gtr2 (gtr2) (Schizosaccharomyces pombe (strain 972 / ATCC 24843) (Fission yeast)).